We begin with the raw amino-acid sequence, 346 residues long: Blue-light-activated histidine kinase 2 (346 aa).

A PAS domain is found at 8–82 (HDKEAWGRLP…KAIRNCEEVE (75 aa)). Cys-55 carries the post-translational modification S-4a-FMN cysteine. The 55-residue stretch at 79–133 (EEVEETIYNYRADGEGFWNHLLMGPLEDQDEKCRYFVGIQVDMGQSESPDRATEL) folds into the PAC domain. The Histidine kinase domain occupies 139–334 (EVQHRVKNHL…IVNIDIPLSQ (196 aa)). His-142 is subject to Phosphohistidine; by autocatalysis.

FMN binds covalently to cysteine after exposure to blue light and this bond is spontaneously broken in the dark.

It catalyses the reaction ATP + protein L-histidine = ADP + protein N-phospho-L-histidine.. In terms of biological role, photosensitive kinase that is involved in increased bacterial virulence upon exposure to light. In Erythrobacter litoralis (strain HTCC2594), this protein is Blue-light-activated histidine kinase 2.